The sequence spans 837 residues: Striatin-interacting protein 1 (837 aa).

N-acetylmethionine is present on Met1. Disordered stretches follow at residues 1–67 (MEPA…ESPD) and 333–423 (AASP…KGLP). The segment covering 18 to 35 (PQPPPPPPPAAAQPPPGA) has biased composition (pro residues). Low complexity predominate over residues 36–46 (PRAAAGLLPGG). Basic and acidic residues predominate over residues 47 to 60 (KAREFNRNQRKDSE). Phosphoserine is present on residues Ser59, Ser335, and Ser339. The span at 356–377 (KALIKQDNLDAFNERDPYKADD) shows a compositional bias: basic and acidic residues. The segment covering 378 to 391 (SREEEEENDDDNSL) has biased composition (acidic residues). The residue at position 788 (Ser788) is a Phosphoserine. The interval 796 to 837 (DNCLQSVLGQRVDLPEDFQMNYDLWLEREVFSKPISWEELLQ) is required for STRIPAK core complex formation.

Belongs to the STRIP family. Part of the core of STRIPAK complexes composed of PP2A catalytic and scaffolding subunits, the striatins (PP2A regulatory subunits), the striatin-associated proteins MOB4, STRIP1 and STRIP2, PDCD10 and members of the STE20 kinases, such as STK24 and STK26. The STRIPAK complex can be extended by adapter proteins such as SLMAP:SIKE1, CTTNBP2 or CTTNBP2NL. Interacts with CDC42BPB. Interacts with CTTNBP2NL.

It is found in the cytoplasm. Plays a role in the regulation of cell morphology and cytoskeletal organization. Required in the cortical actin filament dynamics and cell shape. Part of the striatin-interacting phosphatase and kinase (STRIPAK) complexes. STRIPAK complexes have critical roles in protein (de)phosphorylation and are regulators of multiple signaling pathways including Hippo, MAPK, nuclear receptor and cytoskeleton remodeling. Different types of STRIPAK complexes are involved in a variety of biological processes such as cell growth, differentiation, apoptosis, metabolism and immune regulation. The chain is Striatin-interacting protein 1 from Homo sapiens (Human).